We begin with the raw amino-acid sequence, 95 residues long: Aspartyl/glutamyl-tRNA(Asn/Gln) amidotransferase subunit C (95 aa).

Belongs to the GatC family. As to quaternary structure, heterotrimer of A, B and C subunits.

It carries out the reaction L-glutamyl-tRNA(Gln) + L-glutamine + ATP + H2O = L-glutaminyl-tRNA(Gln) + L-glutamate + ADP + phosphate + H(+). The catalysed reaction is L-aspartyl-tRNA(Asn) + L-glutamine + ATP + H2O = L-asparaginyl-tRNA(Asn) + L-glutamate + ADP + phosphate + 2 H(+). In terms of biological role, allows the formation of correctly charged Asn-tRNA(Asn) or Gln-tRNA(Gln) through the transamidation of misacylated Asp-tRNA(Asn) or Glu-tRNA(Gln) in organisms which lack either or both of asparaginyl-tRNA or glutaminyl-tRNA synthetases. The reaction takes place in the presence of glutamine and ATP through an activated phospho-Asp-tRNA(Asn) or phospho-Glu-tRNA(Gln). The sequence is that of Aspartyl/glutamyl-tRNA(Asn/Gln) amidotransferase subunit C from Acetivibrio thermocellus (strain ATCC 27405 / DSM 1237 / JCM 9322 / NBRC 103400 / NCIMB 10682 / NRRL B-4536 / VPI 7372) (Clostridium thermocellum).